We begin with the raw amino-acid sequence, 338 residues long: DNA-directed RNA polymerase subunit alpha (338 aa).

Residues 1–234 (MIERNWNELI…DQLQIFITFE (234 aa)) form an alpha N-terminal domain (alpha-NTD) region. An alpha C-terminal domain (alpha-CTD) region spans residues 250–338 (FNPALLKKVD…DLAKKFEDQI (89 aa)).

It belongs to the RNA polymerase alpha chain family. As to quaternary structure, homodimer. The RNAP catalytic core consists of 2 alpha, 1 beta, 1 beta' and 1 omega subunit. When a sigma factor is associated with the core the holoenzyme is formed, which can initiate transcription.

It carries out the reaction RNA(n) + a ribonucleoside 5'-triphosphate = RNA(n+1) + diphosphate. In terms of biological role, DNA-dependent RNA polymerase catalyzes the transcription of DNA into RNA using the four ribonucleoside triphosphates as substrates. This chain is DNA-directed RNA polymerase subunit alpha, found in Caulobacter sp. (strain K31).